The primary structure comprises 440 residues: COP9 signalosome complex subunit 5 (440 aa).

An MPN domain is found at Val71 to Lys218. The Zn(2+) site is built by His164, His166, and Asp177. The JAMM motif signature appears at His164 to Asp177. The segment covering Thr319–Asp341 has biased composition (polar residues). Disordered stretches follow at residues Thr319–Asp343 and Ser376–Gly400.

This sequence belongs to the peptidase M67A family. CSN5 subfamily. Component of a COP9 signalosome-like (CSN) complex, composed of at least RRI1/CSN5, CSN9, RRI2/CSN10, PCI8/CSN11, CSN12 and CSI1. Within this complex it probably interacts directly with CSN12. Also interacts with RPN5. It depends on a divalent metal cation as a cofactor.

It localises to the cytoplasm. The protein resides in the nucleus. Catalytic component of the COP9 signalosome (CSN) complex that acts as an regulator of the ubiquitin (Ubl) conjugation pathway by mediating the deneddylation of the cullin subunit of SCF-type E3 ubiquitin-protein ligase complexes. The CSN complex is involved in the regulation of the mating pheromone response. The protein is COP9 signalosome complex subunit 5 (RRI1) of Saccharomyces cerevisiae (strain YJM789) (Baker's yeast).